A 179-amino-acid chain; its full sequence is Translation initiation factor IF-3 (179 aa).

Belongs to the IF-3 family. In terms of assembly, monomer.

Its subcellular location is the cytoplasm. IF-3 binds to the 30S ribosomal subunit and shifts the equilibrium between 70S ribosomes and their 50S and 30S subunits in favor of the free subunits, thus enhancing the availability of 30S subunits on which protein synthesis initiation begins. This is Translation initiation factor IF-3 from Bradyrhizobium diazoefficiens (strain JCM 10833 / BCRC 13528 / IAM 13628 / NBRC 14792 / USDA 110).